The primary structure comprises 637 residues: Neutral ceramidase (637 aa).

Histidine 34 is a Mg(2+) binding site. Histidine 96 and histidine 204 together coordinate Zn(2+). The active-site Nucleophile is serine 256. Zn(2+) contacts are provided by glutamate 417 and tyrosine 453. Mg(2+) contacts are provided by aspartate 575, aspartate 577, and threonine 580.

This sequence belongs to the neutral ceramidase family. Requires Zn(2+) as cofactor. Mg(2+) serves as cofactor.

The enzyme catalyses an N-acylsphing-4-enine + H2O = sphing-4-enine + a fatty acid. The catalysed reaction is an N-acylsphinganine + H2O = sphinganine + a fatty acid. It carries out the reaction an N-acyl-(4R)-4-hydroxysphinganine + H2O = (4R)-hydroxysphinganine + a fatty acid. It catalyses the reaction N-(9Z-octadecenoyl)-sphing-4-enine + H2O = sphing-4-enine + (9Z)-octadecenoate. The enzyme catalyses N-(hexanoyl)sphing-4-enine + H2O = hexanoate + sphing-4-enine. The catalysed reaction is N-hexadecanoylsphing-4-enine + H2O = sphing-4-enine + hexadecanoate. It carries out the reaction N-octadecanoylsphing-4-enine + H2O = sphing-4-enine + octadecanoate. It catalyses the reaction N-eicosanoyl-sphing-4-enine + H2O = eicosanoate + sphing-4-enine. The enzyme catalyses N-(15Z-tetracosenoyl)-sphing-4-enine + H2O = (15Z)-tetracosenoate + sphing-4-enine. The catalysed reaction is N-tetracosanoyl-sphing-4-enine + H2O = tetracosanoate + sphing-4-enine. With respect to regulation, 90% of activity is inhibited by nickel, zinc and calcium ions. Magnesium, cobalt, copper and manganese ions inhibit between 50 and 80% of activity. Catalyzes the cleavage of the N-acyl linkage of the ceramides (Cers) to yield sphingosine (Sph) and free fatty acid. Also catalyzes the synthesis of Cers from Sph and fatty acid. Cers containning C6-C24 fatty acids are well hydrolyzed, and Cers with mono unsaturated fatty acids are much more hydrolyzed than those with saturated fatty acids. This is Neutral ceramidase from Mycobacterium tuberculosis (strain ATCC 25618 / H37Rv).